Consider the following 118-residue polypeptide: MARVKRGVIARKRHKKILKLAKGYYGARSRVFRVAKQAVIKAGQYAYRDRRQKKRQFRALWIARINAGARNNGLSYSRLIAGLKKASIEIDRKVLADLAVNEKAAFAAIVEKAKATLA.

Belongs to the bacterial ribosomal protein bL20 family.

Binds directly to 23S ribosomal RNA and is necessary for the in vitro assembly process of the 50S ribosomal subunit. It is not involved in the protein synthesizing functions of that subunit. In Pseudomonas fluorescens (strain ATCC BAA-477 / NRRL B-23932 / Pf-5), this protein is Large ribosomal subunit protein bL20.